The primary structure comprises 104 residues: L-rhamnose mutarotase (104 aa).

Residue tyrosine 18 coordinates substrate. Histidine 22 serves as the catalytic Proton donor. Residues tyrosine 41 and 76 to 77 (WW) contribute to the substrate site.

The protein belongs to the rhamnose mutarotase family. In terms of assembly, homodimer.

It localises to the cytoplasm. It carries out the reaction alpha-L-rhamnose = beta-L-rhamnose. Its pathway is carbohydrate metabolism; L-rhamnose metabolism. In terms of biological role, involved in the anomeric conversion of L-rhamnose. The protein is L-rhamnose mutarotase of Klebsiella pneumoniae (strain 342).